The sequence spans 370 residues: Queuine tRNA-ribosyltransferase (370 aa).

Catalysis depends on Asp89, which acts as the Proton acceptor. Substrate-binding positions include 89 to 93 (DSGGF), Asp143, Gln185, and Gly212. Residues 243–249 (GVGTPED) are RNA binding. Asp262 serves as the catalytic Nucleophile. Residues 267–271 (TRNAR) are RNA binding; important for wobble base 34 recognition. 4 residues coordinate Zn(2+): Cys300, Cys302, Cys305, and His331.

The protein belongs to the queuine tRNA-ribosyltransferase family. As to quaternary structure, homodimer. Within each dimer, one monomer is responsible for RNA recognition and catalysis, while the other monomer binds to the replacement base PreQ1. Zn(2+) serves as cofactor.

The enzyme catalyses 7-aminomethyl-7-carbaguanine + guanosine(34) in tRNA = 7-aminomethyl-7-carbaguanosine(34) in tRNA + guanine. The protein operates within tRNA modification; tRNA-queuosine biosynthesis. Functionally, catalyzes the base-exchange of a guanine (G) residue with the queuine precursor 7-aminomethyl-7-deazaguanine (PreQ1) at position 34 (anticodon wobble position) in tRNAs with GU(N) anticodons (tRNA-Asp, -Asn, -His and -Tyr). Catalysis occurs through a double-displacement mechanism. The nucleophile active site attacks the C1' of nucleotide 34 to detach the guanine base from the RNA, forming a covalent enzyme-RNA intermediate. The proton acceptor active site deprotonates the incoming PreQ1, allowing a nucleophilic attack on the C1' of the ribose to form the product. After dissociation, two additional enzymatic reactions on the tRNA convert PreQ1 to queuine (Q), resulting in the hypermodified nucleoside queuosine (7-(((4,5-cis-dihydroxy-2-cyclopenten-1-yl)amino)methyl)-7-deazaguanosine). In Methylobacillus flagellatus (strain ATCC 51484 / DSM 6875 / VKM B-1610 / KT), this protein is Queuine tRNA-ribosyltransferase.